We begin with the raw amino-acid sequence, 57 residues long: UPF0391 membrane protein IL0696 (57 aa).

2 consecutive transmembrane segments (helical) span residues 4 to 24 (WVLI…GGIA) and 28 to 48 (AGIA…SLVV).

It belongs to the UPF0391 family.

The protein localises to the cell membrane. The chain is UPF0391 membrane protein IL0696 from Idiomarina loihiensis (strain ATCC BAA-735 / DSM 15497 / L2-TR).